The following is a 274-amino-acid chain: MYNSSNIIDYVIDAWEKLQEQAPLVQCITNSVAANYAANVLLAAGASPAMIDNPFEARSFTEISGALSINVGTPTTEQIQAMQISAKTAHEHDIPWVLDPVGYGPILKWRSDMVDELLQYHPSVIRGNASEIGALAGSLVQSKGVDSTLKSDEMFQLAHNLLTKTSCVAISGETDYILSNAMTCIVKVRGGSHLQPKITATGCALGTLIAAYCAVAPVHLATIAAHIHFAIAGKLAYDQAQTIGSFNTMFMDYIHMMDANLIEQYACIELISDD.

Residue Met-50 coordinates substrate. The ATP site is built by Arg-126 and Ser-171. Ala-200 contributes to the substrate binding site.

It belongs to the Thz kinase family. The cofactor is Mg(2+).

The enzyme catalyses 5-(2-hydroxyethyl)-4-methylthiazole + ATP = 4-methyl-5-(2-phosphooxyethyl)-thiazole + ADP + H(+). The protein operates within cofactor biosynthesis; thiamine diphosphate biosynthesis; 4-methyl-5-(2-phosphoethyl)-thiazole from 5-(2-hydroxyethyl)-4-methylthiazole: step 1/1. Catalyzes the phosphorylation of the hydroxyl group of 4-methyl-5-beta-hydroxyethylthiazole (THZ). This is Hydroxyethylthiazole kinase from Acinetobacter baylyi (strain ATCC 33305 / BD413 / ADP1).